A 784-amino-acid polypeptide reads, in one-letter code: Endonuclease MutS2 (784 aa).

335–342 (GPNTGGKT) contributes to the ATP binding site. A disordered region spans residues 527–546 (ERSKKQAEEDEARAHSAREE). Residues 709–784 (LDLRGERYED…GTGVTVVELK (76 aa)) enclose the Smr domain.

It belongs to the DNA mismatch repair MutS family. MutS2 subfamily. As to quaternary structure, homodimer. Binds to stalled ribosomes, contacting rRNA.

Endonuclease that is involved in the suppression of homologous recombination and thus may have a key role in the control of bacterial genetic diversity. Its function is as follows. Acts as a ribosome collision sensor, splitting the ribosome into its 2 subunits. Detects stalled/collided 70S ribosomes which it binds and splits by an ATP-hydrolysis driven conformational change. Acts upstream of the ribosome quality control system (RQC), a ribosome-associated complex that mediates the extraction of incompletely synthesized nascent chains from stalled ribosomes and their subsequent degradation. Probably generates substrates for RQC. The protein is Endonuclease MutS2 of Geobacillus thermodenitrificans (strain NG80-2).